The following is a 261-amino-acid chain: Cytochrome c oxidase subunit 3 (261 aa).

Over 1–15 (MTKQMHAFHMVNPSP) the chain is Mitochondrial matrix. The chain crosses the membrane as a helical span at residues 16–34 (WPLTGAASAFMLTSGLAMW). The Mitochondrial intermembrane portion of the chain corresponds to 35–40 (FHKHSN). The chain crosses the membrane as a helical span at residues 41-66 (TLIFLSMILMLLTMYQWWRDITREGT). The Mitochondrial matrix segment spans residues 67–72 (FQGHHT). The chain crosses the membrane as a helical span at residues 73–105 (SLVQKSLRYGMILFIVSEVCFFFGFFWTFYHSS). The Mitochondrial intermembrane segment spans residues 106–128 (LSPSPDLGMMWPPKGVIPLDPFE). Residues 129–152 (IPLLNTAILLGSGVSVTWAHHSLM) form a helical membrane-spanning segment. At 153 to 155 (EKT) the chain is on the mitochondrial matrix side. A helical membrane pass occupies residues 156-183 (HKDMVISLSITIILGIYFTLLQGMEYFN). Residues 184–190 (STFNISD) lie on the Mitochondrial intermembrane side of the membrane. Residues 191–223 (NAYGSTFFVATGFHGGHVIIGTLFLTVCLLRQL) form a helical membrane-spanning segment. The Mitochondrial matrix segment spans residues 224–232 (MFHFTSSHH). A helical membrane pass occupies residues 233 to 256 (FGFEAAAWYWHFVDVVWLFLFISI). Residues 257-261 (YWWGS) lie on the Mitochondrial intermembrane side of the membrane.

Belongs to the cytochrome c oxidase subunit 3 family. In terms of assembly, component of the cytochrome c oxidase (complex IV, CIV), a multisubunit enzyme composed of 14 subunits. The complex is composed of a catalytic core of 3 subunits MT-CO1, MT-CO2 and MT-CO3, encoded in the mitochondrial DNA, and 11 supernumerary subunits COX4I, COX5A, COX5B, COX6A, COX6B, COX6C, COX7A, COX7B, COX7C, COX8 and NDUFA4, which are encoded in the nuclear genome. The complex exists as a monomer or a dimer and forms supercomplexes (SCs) in the inner mitochondrial membrane with NADH-ubiquinone oxidoreductase (complex I, CI) and ubiquinol-cytochrome c oxidoreductase (cytochrome b-c1 complex, complex III, CIII), resulting in different assemblies (supercomplex SCI(1)III(2)IV(1) and megacomplex MCI(2)III(2)IV(2)).

Its subcellular location is the mitochondrion inner membrane. The enzyme catalyses 4 Fe(II)-[cytochrome c] + O2 + 8 H(+)(in) = 4 Fe(III)-[cytochrome c] + 2 H2O + 4 H(+)(out). Its function is as follows. Component of the cytochrome c oxidase, the last enzyme in the mitochondrial electron transport chain which drives oxidative phosphorylation. The respiratory chain contains 3 multisubunit complexes succinate dehydrogenase (complex II, CII), ubiquinol-cytochrome c oxidoreductase (cytochrome b-c1 complex, complex III, CIII) and cytochrome c oxidase (complex IV, CIV), that cooperate to transfer electrons derived from NADH and succinate to molecular oxygen, creating an electrochemical gradient over the inner membrane that drives transmembrane transport and the ATP synthase. Cytochrome c oxidase is the component of the respiratory chain that catalyzes the reduction of oxygen to water. Electrons originating from reduced cytochrome c in the intermembrane space (IMS) are transferred via the dinuclear copper A center (CU(A)) of subunit 2 and heme A of subunit 1 to the active site in subunit 1, a binuclear center (BNC) formed by heme A3 and copper B (CU(B)). The BNC reduces molecular oxygen to 2 water molecules using 4 electrons from cytochrome c in the IMS and 4 protons from the mitochondrial matrix. This Myxine glutinosa (Atlantic hagfish) protein is Cytochrome c oxidase subunit 3 (MT-CO3).